We begin with the raw amino-acid sequence, 1097 residues long: MSVEAYGPSSQTLTFLDTEETELLGADTQGSEYDFTDFTLPSQTQTQGHTQSQLDNQLNGPDDGLHNGGMDDSVAKASQLLAELNFEEDEEDTYYTKDLPVHACRSYCGIHDPACVVYCNTSKKWFCNGRGNTSGSHIVNHLVRAKCKEVTLHKDGPLGETVLECYNCGCRNVFLLGFIPAKADSVVVLLCRQPCASQSSLKDINWDSSQWQPLIQDRCFLSWLVKIPSEQEQLRARQITAQQINKLEELWKDNPCATLEDLEKPGVDEEPQHVLLRYEDAYQYQNIFGPLVKLEADYDKKLKESQTQDNITVRWDLGLNKKRIAYFTLPKTDSDMRLMQGDEICLRYKGDLAPLWKGIGHVIKVPDSYGDEIAIELRTSVGAPVEIPHNYQVDFVWKSTSFDRMQSALKTFAVDETSVSGYIYHKLLGHEVEDVTIKCQLPKRFTANGLPDLNHSQVYAVKTVLQRPLSLIQGPPGTGKTVTSATIVYHLSRQGNGPVLVCAPSNIAVDQLTEKIDKTGLKVVRLCAKSREAIESPVSFLALHNQISNMDSMPELQKLQQLKDETGELSSADEKRYRALKRTAERELLMNADVIWCTCVRAGDPRLAKMQFRSILIDESTQATEPKCIGPVELGAKQLILGEITASWSCVMCKKAAKAGLSQSLFERLVVLGIRPIRLQVQYRMHPALSAFPSNIFYEGSLQNGVTAGDRIKKGFDFQWPQPEKPMFFYVTQGQEEIASSGTSYLNRTEAANVEKITTRLLKAGAKPDQIGIITPYEGQRSYLVQYMQFSGSLHTKLYQVEIASVDAFQGREKDFIILSCVRANEHQGIGFLNDPRRLNVALTRAKYGVIIVGNPKALSKQPLWNNLLNNYKEQKVLVEGPLNNLRESLMQFSKPRKLVNTINPRFMSTAMYDAREALIPGSAYDRSNTGGRPSNMYFQTHDQIGMIGAAASHLAALNIPIPFNLVMPPMPPPSYQGQTNGPAAGRGAMKGKSGRGGRQRIQWFWEPGGWSHAKQSDQPGWGFPVILSGATDTGLHLHEPAFPDEPARTLPARALPWDSYLGDEFKSQIDVALSQDSTYQGERAYQHGGVTGLSQY.

Over residues 42–53 (SQTQTQGHTQSQ) the composition is skewed to low complexity. A disordered region spans residues 42–67 (SQTQTQGHTQSQLDNQLNGPDDGLHN). Residues 96 to 254 (TKDLPVHACR…NKLEELWKDN (159 aa)) form the Upf1 CH-rich domain. Positions 104, 108, 119, 122, 127, 137, 141, 147, 165, 168, 191, and 195 each coordinate Zn(2+). The C3H stretch occupies residues 104–137 (CRSYCGIHDPACVVYCNTSKKWFCNGRGNTSGSH). A CC/SHH/C region spans residues 119-147 (CNTSKKWFCNGRGNTSGSHIVNHLVRAKC). Positions 165 to 195 (CYNCGCRNVFLLGFIPAKADSVVVLLCRQPC) are C4. Residues Gln457, 474–481 (GPPGTGKT), Tyr683, and Glu813 each bind ATP. The segment at 977 to 998 (QGQTNGPAAGRGAMKGKSGRGG) is disordered.

It belongs to the DNA2/NAM7 helicase family.

Its subcellular location is the cytoplasm. The protein localises to the P-body. The enzyme catalyses ATP + H2O = ADP + phosphate + H(+). Its function is as follows. RNA-dependent helicase required for nonsense-mediated decay (NMD) of aberrant mRNAs containing premature stop codons and modulates the expression level of normal mRNAs. The formation of an rent1-rent2-rent3 surveillance complex is believed to activate NMD. This Takifugu rubripes (Japanese pufferfish) protein is Putative regulator of nonsense transcripts 1 (rent1).